Here is a 540-residue protein sequence, read N- to C-terminus: Chaperonin GroEL 1 (540 aa).

ATP is bound by residues 29-32, 86-90, Gly413, 478-480, and Asp494; these read TLGP, DGTTT, and NAA.

The protein belongs to the chaperonin (HSP60) family. As to quaternary structure, forms a cylinder of 14 subunits composed of two heptameric rings stacked back-to-back. Interacts with the co-chaperonin GroES.

It localises to the cytoplasm. The catalysed reaction is ATP + H2O + a folded polypeptide = ADP + phosphate + an unfolded polypeptide.. Functionally, together with its co-chaperonin GroES, plays an essential role in assisting protein folding. The GroEL-GroES system forms a nano-cage that allows encapsulation of the non-native substrate proteins and provides a physical environment optimized to promote and accelerate protein folding. This Mycobacterium sp. (strain JLS) protein is Chaperonin GroEL 1.